The following is a 24-amino-acid chain: DYE-linked aldehyde dehydrogenase, alpha chain (24 aa).

In terms of assembly, heterotetramer composed of an alpha, a beta and two gamma chains. Mo-molybdopterin cytosine dinucleotide is required as a cofactor.

Its function is as follows. Active with aldehydes and formate esters as substrates. The protein is DYE-linked aldehyde dehydrogenase, alpha chain of Amycolatopsis methanolica.